Reading from the N-terminus, the 230-residue chain is CRP-like protein Clp (230 aa).

Residue 18–139 (PSLALDAGTI…APKILYAIGV (122 aa)) participates in a nucleoside 3',5'-cyclic phosphate binding. Residues 158–230 (LDVTDRIVRT…GKTVVLYGTR (73 aa)) form the HTH crp-type domain. The H-T-H motif DNA-binding region spans 190-209 (RQELARLVGCSREMAGRVLK).

In terms of assembly, homodimer.

Its subcellular location is the cytoplasm. Allosterically inhibited by cyclic di-GMP (c-di-GMP), which binds to Clp and abolishes its ability to bind its target gene promoter. Its function is as follows. Global transcriptional regulator that regulates virulence factors production by activating or repressing the expression of a large set of genes in diffusible signal factor (DSF) pathway. The sequence is that of CRP-like protein Clp (clp) from Xanthomonas axonopodis pv. citri (strain 306).